A 154-amino-acid polypeptide reads, in one-letter code: Prefoldin subunit alpha (154 aa).

Residues 119–154 (EKAEVETEMEELEQQAQQMQQQQMQQMMQQQEQEDE) form a disordered region. The segment covering 132 to 154 (QQAQQMQQQQMQQMMQQQEQEDE) has biased composition (low complexity).

This sequence belongs to the prefoldin subunit alpha family. As to quaternary structure, heterohexamer of two alpha and four beta subunits.

It localises to the cytoplasm. In terms of biological role, molecular chaperone capable of stabilizing a range of proteins. Seems to fulfill an ATP-independent, HSP70-like function in archaeal de novo protein folding. The polypeptide is Prefoldin subunit alpha (Haloarcula marismortui (strain ATCC 43049 / DSM 3752 / JCM 8966 / VKM B-1809) (Halobacterium marismortui)).